Here is a 307-residue protein sequence, read N- to C-terminus: Taste receptor type 2 member 10 (307 aa).

The Extracellular portion of the chain corresponds to Met-1–Glu-6. The helical transmembrane segment at Gly-7–Ile-27 threads the bilayer. At Gly-28 to Thr-42 the chain is on the cytoplasmic side. A helical transmembrane segment spans residues Ile-43–Thr-63. The Extracellular segment spans residues Asp-64 to Thr-100. A helical membrane pass occupies residues Ser-101 to Leu-121. Over Lys-122–Asn-126 the chain is Cytoplasmic. Residues Met-127–Ile-147 form a helical membrane-spanning segment. At Ala-148–Asn-179 the chain is on the extracellular side. An N-linked (GlcNAc...) asparagine glycan is attached at Asn-158. The chain crosses the membrane as a helical span at residues Leu-180 to Leu-200. Residues Trp-201–Lys-227 are Cytoplasmic-facing. The helical transmembrane segment at Val-228–Ser-248 threads the bilayer. Residues Tyr-249–Leu-257 are Extracellular-facing. Residues Leu-258–Ile-278 traverse the membrane as a helical segment. Residues Leu-279–Thr-307 are Cytoplasmic-facing.

This sequence belongs to the G-protein coupled receptor T2R family.

It localises to the membrane. Functionally, receptor that may play a role in the perception of bitterness and is gustducin-linked. May play a role in sensing the chemical composition of the gastrointestinal content. The activity of this receptor may stimulate alpha gustducin, mediate PLC-beta-2 activation and lead to the gating of TRPM5. This Pan paniscus (Pygmy chimpanzee) protein is Taste receptor type 2 member 10 (TAS2R10).